Consider the following 473-residue polypeptide: Bifunctional protein GlmU (473 aa).

Residues 1–241 (MATQPTPLTA…VGSLVGINDR (241 aa)) are pyrophosphorylase. UDP-N-acetyl-alpha-D-glucosamine is bound by residues 13–16 (LAAG), lysine 27, glutamine 84, and 89–90 (GT). Position 114 (aspartate 114) interacts with Mg(2+). UDP-N-acetyl-alpha-D-glucosamine contacts are provided by glycine 152, glutamate 167, asparagine 182, and asparagine 239. A Mg(2+)-binding site is contributed by asparagine 239. The tract at residues 242 to 262 (AQLAAAEEVLYGRIADRLRKS) is linker. Residues 263–473 (GVTIRTSARI…KARLKDAAKK (211 aa)) are N-acetyltransferase. Positions 343 and 361 each coordinate UDP-N-acetyl-alpha-D-glucosamine. Histidine 373 acts as the Proton acceptor in catalysis. UDP-N-acetyl-alpha-D-glucosamine contacts are provided by tyrosine 376 and asparagine 387. Acetyl-CoA-binding positions include alanine 390, 396–397 (NY), serine 415, threonine 433, and arginine 450.

It in the N-terminal section; belongs to the N-acetylglucosamine-1-phosphate uridyltransferase family. This sequence in the C-terminal section; belongs to the transferase hexapeptide repeat family. Homotrimer. Requires Mg(2+) as cofactor.

The protein resides in the cytoplasm. It carries out the reaction alpha-D-glucosamine 1-phosphate + acetyl-CoA = N-acetyl-alpha-D-glucosamine 1-phosphate + CoA + H(+). It catalyses the reaction N-acetyl-alpha-D-glucosamine 1-phosphate + UTP + H(+) = UDP-N-acetyl-alpha-D-glucosamine + diphosphate. It participates in nucleotide-sugar biosynthesis; UDP-N-acetyl-alpha-D-glucosamine biosynthesis; N-acetyl-alpha-D-glucosamine 1-phosphate from alpha-D-glucosamine 6-phosphate (route II): step 2/2. Its pathway is nucleotide-sugar biosynthesis; UDP-N-acetyl-alpha-D-glucosamine biosynthesis; UDP-N-acetyl-alpha-D-glucosamine from N-acetyl-alpha-D-glucosamine 1-phosphate: step 1/1. The protein operates within bacterial outer membrane biogenesis; LPS lipid A biosynthesis. Its function is as follows. Catalyzes the last two sequential reactions in the de novo biosynthetic pathway for UDP-N-acetylglucosamine (UDP-GlcNAc). The C-terminal domain catalyzes the transfer of acetyl group from acetyl coenzyme A to glucosamine-1-phosphate (GlcN-1-P) to produce N-acetylglucosamine-1-phosphate (GlcNAc-1-P), which is converted into UDP-GlcNAc by the transfer of uridine 5-monophosphate (from uridine 5-triphosphate), a reaction catalyzed by the N-terminal domain. The chain is Bifunctional protein GlmU from Sorangium cellulosum (strain So ce56) (Polyangium cellulosum (strain So ce56)).